A 197-amino-acid chain; its full sequence is Nucleoid occlusion factor SlmA (197 aa).

The region spanning 7–67 is the HTH tetR-type domain; the sequence is INRREHILQC…GLIEFIEESL (61 aa). A DNA-binding region (H-T-H motif) is located at residues 30-49; sequence TTAKLASEVGVSEAALYRHF. Positions 110–130 form a coiled coil; the sequence is ALLGENERLRSRISSLFAKIE.

It belongs to the nucleoid occlusion factor SlmA family. Homodimer. Interacts with FtsZ.

Its subcellular location is the cytoplasm. It is found in the nucleoid. In terms of biological role, required for nucleoid occlusion (NO) phenomenon, which prevents Z-ring formation and cell division over the nucleoid. Acts as a DNA-associated cell division inhibitor that binds simultaneously chromosomal DNA and FtsZ, and disrupts the assembly of FtsZ polymers. SlmA-DNA-binding sequences (SBS) are dispersed on non-Ter regions of the chromosome, preventing FtsZ polymerization at these regions. This Shewanella sp. (strain W3-18-1) protein is Nucleoid occlusion factor SlmA.